The sequence spans 527 residues: Bifunctional purine biosynthesis protein PurH (527 aa).

One can recognise an MGS-like domain in the interval 8 to 156; that stretch reads AGAKRPIRRA…KNHPSVAVVV (149 aa).

It belongs to the PurH family.

The enzyme catalyses (6R)-10-formyltetrahydrofolate + 5-amino-1-(5-phospho-beta-D-ribosyl)imidazole-4-carboxamide = 5-formamido-1-(5-phospho-D-ribosyl)imidazole-4-carboxamide + (6S)-5,6,7,8-tetrahydrofolate. The catalysed reaction is IMP + H2O = 5-formamido-1-(5-phospho-D-ribosyl)imidazole-4-carboxamide. Its pathway is purine metabolism; IMP biosynthesis via de novo pathway; 5-formamido-1-(5-phospho-D-ribosyl)imidazole-4-carboxamide from 5-amino-1-(5-phospho-D-ribosyl)imidazole-4-carboxamide (10-formyl THF route): step 1/1. It participates in purine metabolism; IMP biosynthesis via de novo pathway; IMP from 5-formamido-1-(5-phospho-D-ribosyl)imidazole-4-carboxamide: step 1/1. The polypeptide is Bifunctional purine biosynthesis protein PurH (Mycobacterium sp. (strain JLS)).